The sequence spans 406 residues: Succinylornithine transaminase (406 aa).

N6-(pyridoxal phosphate)lysine is present on lysine 252.

Belongs to the class-III pyridoxal-phosphate-dependent aminotransferase family. AstC subfamily. Requires pyridoxal 5'-phosphate as cofactor.

It carries out the reaction N(2)-succinyl-L-ornithine + 2-oxoglutarate = N-succinyl-L-glutamate 5-semialdehyde + L-glutamate. Its pathway is amino-acid degradation; L-arginine degradation via AST pathway; L-glutamate and succinate from L-arginine: step 3/5. Functionally, catalyzes the transamination of N(2)-succinylornithine and alpha-ketoglutarate into N(2)-succinylglutamate semialdehyde and glutamate. Can also act as an acetylornithine aminotransferase. The protein is Succinylornithine transaminase of Escherichia coli O7:K1 (strain IAI39 / ExPEC).